A 358-amino-acid chain; its full sequence is Neutral protease 2 homolog MGYG_02351 (358 aa).

An N-terminal signal peptide occupies residues methionine 1–alanine 17. Positions alanine 18 to arginine 183 are excised as a propeptide. 2 disulfides stabilise this stretch: cysteine 191–cysteine 260 and cysteine 267–cysteine 285. Histidine 309 provides a ligand contact to Zn(2+). Residue glutamate 310 is part of the active site. 2 residues coordinate Zn(2+): histidine 313 and aspartate 324.

It belongs to the peptidase M35 family. Zn(2+) is required as a cofactor.

The protein resides in the secreted. It carries out the reaction Preferential cleavage of bonds with hydrophobic residues in P1'. Also 3-Asn-|-Gln-4 and 8-Gly-|-Ser-9 bonds in insulin B chain.. Secreted metalloproteinase that allows assimilation of proteinaceous substrates. Shows high activities on basic nuclear substrates such as histone and protamine. May be involved in virulence. The protein is Neutral protease 2 homolog MGYG_02351 of Arthroderma gypseum (strain ATCC MYA-4604 / CBS 118893) (Microsporum gypseum).